Consider the following 397-residue polypeptide: Exodeoxyribonuclease 7 large subunit (397 aa).

The protein belongs to the XseA family. As to quaternary structure, heterooligomer composed of large and small subunits.

The protein localises to the cytoplasm. The enzyme catalyses Exonucleolytic cleavage in either 5'- to 3'- or 3'- to 5'-direction to yield nucleoside 5'-phosphates.. Functionally, bidirectionally degrades single-stranded DNA into large acid-insoluble oligonucleotides, which are then degraded further into small acid-soluble oligonucleotides. This chain is Exodeoxyribonuclease 7 large subunit, found in Anaplasma marginale (strain St. Maries).